The chain runs to 375 residues: Growth/differentiation factor 8 (375 aa).

The signal sequence occupies residues methionine 1–leucine 23. A propeptide spanning residues asparagine 24–arginine 266 is cleaved from the precursor. 2 N-linked (GlcNAc...) asparagine glycosylation sites follow: asparagine 48 and asparagine 71. 4 cysteine pairs are disulfide-bonded: cysteine 272–cysteine 282, cysteine 281–cysteine 340, cysteine 309–cysteine 372, and cysteine 313–cysteine 374.

Belongs to the TGF-beta family. In terms of assembly, homodimer; disulfide-linked. Interacts with WFIKKN2, leading to inhibit its activity. Interacts with FSTL3. Synthesized as large precursor molecule that undergoes proteolytic cleavage to generate an N-terminal propeptide and a disulfide linked C-terminal dimer, which is the biologically active molecule. The circulating form consists of a latent complex of the C-terminal dimer and other proteins, including its propeptide, which maintain the C-terminal dimer in a latent, inactive state. Ligand activation requires additional cleavage of the prodomain by a tolloid-like metalloproteinase.

The protein resides in the secreted. Its function is as follows. Acts specifically as a negative regulator of skeletal muscle growth. The protein is Growth/differentiation factor 8 (MSTN) of Ovis aries (Sheep).